The sequence spans 416 residues: Transmembrane protease serine 11B-like protein (416 aa).

The Cytoplasmic portion of the chain corresponds to 1-15; that stretch reads MYRPVIASRKSIPPW. Residues 16–36 traverse the membrane as a helical; Signal-anchor for type II membrane protein segment; sequence LIILCVLGVLAALGIIIGLLV. Residues 37-416 are Extracellular-facing; sequence HFLAVENKIY…RNWIASKTGI (380 aa). Residues 44–161 enclose the SEA domain; it reads KIYYYQGGFK…GSLKLTEISK (118 aa). N-linked (GlcNAc...) asparagine glycosylation is present at N107. Positions 185–415 constitute a Peptidase S1 domain; sequence ITGGSTAHKG…YRNWIASKTG (231 aa). The cysteines at positions 210 and 226 are disulfide-linked. H225 serves as the catalytic Charge relay system. N-linked (GlcNAc...) asparagine glycosylation is present at N235. D270 acts as the Charge relay system in catalysis. Intrachain disulfides connect C335/C351 and C362/C391. Residue S366 is the Charge relay system of the active site.

The protein belongs to the peptidase S1 family. As to expression, expressed in esophagus, cervix, tongue, and testes.

It is found in the cell membrane. With respect to regulation, inhibited by aprotinin, leupeptin, benzamidine, SERPINA1, SPINT1 and SPINT2. Functionally, serine protease. This is Transmembrane protease serine 11B-like protein (Tmprss11b) from Mus musculus (Mouse).